We begin with the raw amino-acid sequence, 306 residues long: Aspartate carbamoyltransferase catalytic subunit (306 aa).

Residues Arg-54 and Thr-55 each contribute to the carbamoyl phosphate site. L-aspartate is bound at residue Lys-83. Carbamoyl phosphate contacts are provided by Arg-104, His-132, and Gln-135. Positions 165 and 227 each coordinate L-aspartate. The carbamoyl phosphate site is built by Leu-266 and Pro-267.

It belongs to the aspartate/ornithine carbamoyltransferase superfamily. ATCase family. In terms of assembly, heterododecamer (2C3:3R2) of six catalytic PyrB chains organized as two trimers (C3), and six regulatory PyrI chains organized as three dimers (R2).

It carries out the reaction carbamoyl phosphate + L-aspartate = N-carbamoyl-L-aspartate + phosphate + H(+). It functions in the pathway pyrimidine metabolism; UMP biosynthesis via de novo pathway; (S)-dihydroorotate from bicarbonate: step 2/3. Functionally, catalyzes the condensation of carbamoyl phosphate and aspartate to form carbamoyl aspartate and inorganic phosphate, the committed step in the de novo pyrimidine nucleotide biosynthesis pathway. This is Aspartate carbamoyltransferase catalytic subunit from Clostridium kluyveri (strain NBRC 12016).